The primary structure comprises 424 residues: Neurotensin receptor type 1 (424 aa).

The disordered stretch occupies residues 1-23 (MHLNSSVPQGTPGEPDAQPFSGP). Residues 1–68 (MHLNSSVPQG…TDIYSKVLVT (68 aa)) lie on the Extracellular side of the membrane. N-linked (GlcNAc...) asparagine glycans are attached at residues Asn-4, Asn-38, and Asn-42. A helical membrane pass occupies residues 69–89 (AIYLALFVVGTVGNSVTAFTL). Over 90–103 (ARKKSLQSLQSTVH) the chain is Cytoplasmic. Residues 104–123 (YHLGSLALSDLLILLLAMPV) traverse the membrane as a helical segment. Residues 124 to 143 (ELYNFIWVHHPWAFGDAGCR) lie on the Extracellular side of the membrane. Cysteines 142 and 225 form a disulfide. A helical membrane pass occupies residues 144–165 (GYYFLRDACTYATALNVASLSV). Over 166–185 (ERYLAICHPFKAKTLMSRSR) the chain is Cytoplasmic. A helical membrane pass occupies residues 186-206 (TKKFISAIWLASALLAIPMLF). The Extracellular segment spans residues 207 to 235 (TMGLQNRSGDGTHPGGLVCTPIVDTATVK). A helical transmembrane segment spans residues 236-260 (VVIQVNTFMSFLFPMLVISILNTVI). The Cytoplasmic segment spans residues 261–308 (ANKLTVMVHQAAEQGRVCTVGTHNGLEHSTFNMTIEPGRVQALRHGVL). A helical membrane pass occupies residues 309 to 330 (VLRAVVIAFVVCWLPYHVRRLM). The segment at 326 to 349 (VRRLMFCYISDEQWTTFLFDFYHY) is neurotensin binding. Residues 331-348 (FCYISDEQWTTFLFDFYH) are Extracellular-facing. The chain crosses the membrane as a helical span at residues 349–369 (YFYMLTNALFYVSSAINPILY). Residues 370-424 (NLVSANFRQVFLSTLACLCPGWRHRRKKRPTFSRKPNSMSSNHAFSTSATRETLY) lie on the Cytoplasmic side of the membrane. Residues Cys-386 and Cys-388 are each lipidated (S-palmitoyl cysteine). The interval 397–424 (KRPTFSRKPNSMSSNHAFSTSATRETLY) is disordered. Residues 403-424 (RKPNSMSSNHAFSTSATRETLY) show a composition bias toward polar residues.

It belongs to the G-protein coupled receptor 1 family. Neurotensin receptor subfamily. NTSR1 sub-subfamily. Interacts (palmitoylated form) with GNA11. Post-translationally, N-glycosylated. Palmitoylated; this is required for normal localization at membrane rafts and normal GNA11-mediated activation of down-stream signaling cascades. The palmitoylation level increases in response to neurotensin treatment. Detected in brain and small intestine.

Its subcellular location is the cell membrane. The protein localises to the membrane raft. Functionally, G-protein coupled receptor for the tridecapeptide neurotensin (NTS). Signaling is effected via G proteins that activate a phosphatidylinositol-calcium second messenger system. Signaling leads to the activation of downstream MAP kinases and protects cells against apoptosis. This is Neurotensin receptor type 1 (Ntsr1) from Rattus norvegicus (Rat).